Consider the following 196-residue polypeptide: Anthranilate synthase component 2 (196 aa).

The Glutamine amidotransferase type-1 domain occupies 3 to 196; it reads NIVFIDNFDS…IEWALEKNNA (194 aa). 57–59 is a binding site for L-glutamine; sequence GPG. Cysteine 84 (nucleophile; for GATase activity) is an active-site residue. L-glutamine contacts are provided by residues glutamine 88 and 134–135; that span reads SL. Active-site for GATase activity residues include histidine 170 and glutamate 172.

Heterotetramer consisting of two non-identical subunits: a beta subunit (TrpG) and a large alpha subunit (TrpE).

It catalyses the reaction chorismate + L-glutamine = anthranilate + pyruvate + L-glutamate + H(+). Its pathway is amino-acid biosynthesis; L-tryptophan biosynthesis; L-tryptophan from chorismate: step 1/5. Functionally, part of a heterotetrameric complex that catalyzes the two-step biosynthesis of anthranilate, an intermediate in the biosynthesis of L-tryptophan. In the first step, the glutamine-binding beta subunit (TrpG) of anthranilate synthase (AS) provides the glutamine amidotransferase activity which generates ammonia as a substrate that, along with chorismate, is used in the second step, catalyzed by the large alpha subunit of AS (TrpE) to produce anthranilate. In the absence of TrpG, TrpE can synthesize anthranilate directly from chorismate and high concentrations of ammonia. This is Anthranilate synthase component 2 (trpG) from Vibrio parahaemolyticus serotype O3:K6 (strain RIMD 2210633).